Reading from the N-terminus, the 98-residue chain is Large ribosomal subunit protein bL28 (98 aa).

Belongs to the bacterial ribosomal protein bL28 family.

The protein is Large ribosomal subunit protein bL28 of Chelativorans sp. (strain BNC1).